We begin with the raw amino-acid sequence, 218 residues long: MHHNDHSNGMPMSMVFDTSTEITLFFQGWTTTTAASYSLTLLFLFALAVFNRFLGVLKFQLDVKHTQPTEGRVPKLQQPRARRRHAIPKARLSPQPRYMQVAETDTEDEAPFSSAQFLESDAEHTRHEFPSDLIQEPQGPLGTRRWWNVYRRWSWRRDGTGSLLEGLRALVGYALMLAVMTFNVGVLCAVVGGIVVGELLLGRYAQPSLGWQDDACHH.

2 helical membrane passes run 37 to 57 (YSLTLLFLFALAVFNRFLGVL) and 176 to 196 (MLAVMTFNVGVLCAVVGGIVV).

The protein belongs to the copper transporter (Ctr) (TC 1.A.56) family. SLC31A subfamily.

Its subcellular location is the membrane. The catalysed reaction is Cu(2+)(in) = Cu(2+)(out). In terms of biological role, putative copper transporter; part of the crm gene cluster that mediates the biosynthesis of a yet unidentified copper-responsive metabolite. Probably involved in the transport of copper, even if it does not act as a major copper transporter. In contrast to crmA, is not involved in the biosynthesis of fumivalines or fumicicolins. The polypeptide is Putative copper transporter crmD (Aspergillus fumigatus (strain ATCC MYA-4609 / CBS 101355 / FGSC A1100 / Af293) (Neosartorya fumigata)).